Here is a 492-residue protein sequence, read N- to C-terminus: MKTNPLVFVVSTAVEKNAGYITQIIGPVLDVAFSPGKLPNIYNSLIVKGQNPAGQEINVTCEVQQLLGNDRVRAVAMSATDGLMRGMKVIDTGAPLSVPVGEVTLGRIFNVLGEPVDNLGPVDAGTTSPIHKSAPAFTQLDTKLSIFETGIKVVDLLAPYRRGGKIGLFGGAGVGKTVLIMELINNIAKAHGGVSVFGGVGERTREGNDLYMEMKESKVINQENISESKVALVYGQMNEPPGARMRVGLTALTMAEYFRDVNKQDVLLFIDNIFRFVQAGSEVSASSGRMPSAVGYQPTLATEMGSLQERITSTKEGSITSIQAVYVPADDLTDPAPATTFAHSDATTVLSRGLAAKGIYPAVDPLDSTSTMLQPWIVGEEHYETAQGVKQTLQRYKELQDIIAILGLDELSEEDRLTVARARKIERFLSQPFFVAEVFTGSPGKYVSLIETIKGFQMILSGELDSLPEQAFYLVGNIDEATAKAATLQVES.

170–177 is a binding site for ATP; that stretch reads GGAGVGKT.

It belongs to the ATPase alpha/beta chains family. F-type ATPases have 2 components, CF(1) - the catalytic core - and CF(0) - the membrane proton channel. CF(1) has five subunits: alpha(3), beta(3), gamma(1), delta(1), epsilon(1). CF(0) has four main subunits: a(1), b(1), b'(1) and c(9-12).

Its subcellular location is the plastid. It localises to the chloroplast thylakoid membrane. The catalysed reaction is ATP + H2O + 4 H(+)(in) = ADP + phosphate + 5 H(+)(out). In terms of biological role, produces ATP from ADP in the presence of a proton gradient across the membrane. The catalytic sites are hosted primarily by the beta subunits. The protein is ATP synthase subunit beta, chloroplastic of Angiopteris lygodiifolia (Turnip fern).